A 136-amino-acid chain; its full sequence is Small ribosomal subunit protein uS8c (136 aa).

The protein belongs to the universal ribosomal protein uS8 family. As to quaternary structure, part of the 30S ribosomal subunit.

The protein resides in the plastid. Its subcellular location is the chloroplast. Its function is as follows. One of the primary rRNA binding proteins, it binds directly to 16S rRNA central domain where it helps coordinate assembly of the platform of the 30S subunit. The polypeptide is Small ribosomal subunit protein uS8c (rps8) (Citrus sinensis (Sweet orange)).